We begin with the raw amino-acid sequence, 357 residues long: Sorbitol dehydrogenase (357 aa).

A2 bears the N-acetylalanine mark. C45 is a Zn(2+) binding site. Y51 serves as a coordination point for substrate. Zn(2+) is bound by residues H70, E71, and E156. E156 is a binding site for substrate. A Phosphoserine modification is found at S169. Residues I184, D204, R209, 273–275, and 297–299 contribute to the NAD(+) site; these read VGM and VFR. Substrate contacts are provided by R299 and Y300.

It belongs to the zinc-containing alcohol dehydrogenase family. As to quaternary structure, homotetramer; dimer of dimers. Zn(2+) serves as cofactor. As to expression, expressed in liver and testis.

The protein localises to the mitochondrion membrane. The protein resides in the cell projection. It is found in the cilium. Its subcellular location is the flagellum. It catalyses the reaction keto-D-fructose + NADH + H(+) = D-sorbitol + NAD(+). It carries out the reaction xylitol + NAD(+) = D-xylulose + NADH + H(+). The catalysed reaction is L-iditol + NAD(+) = keto-L-sorbose + NADH + H(+). In terms of biological role, polyol dehydrogenase that catalyzes the reversible NAD(+)-dependent oxidation of various sugar alcohols. Is active with D-sorbitol (D-glucitol) leading to the C2-oxidized product D-fructose. Is a key enzyme in the polyol pathway that interconverts glucose and fructose via sorbitol, which constitutes an important alternate route for glucose metabolism. May play a role in sperm motility by using sorbitol as an alternative energy source for sperm motility. In Rattus norvegicus (Rat), this protein is Sorbitol dehydrogenase (Sord).